The sequence spans 95 residues: 1,2-phenylacetyl-CoA epoxidase, subunit B (95 aa).

In terms of assembly, homotrimer. Forms a stable heterodimer with PaaC. Probably forms an oligomer with PaaAC.

It functions in the pathway aromatic compound metabolism; phenylacetate degradation. Component of 1,2-phenylacetyl-CoA epoxidase multicomponent enzyme system which catalyzes the reduction of phenylacetyl-CoA (PA-CoA) to form 1,2-epoxyphenylacetyl-CoA. The subunit B may play a regulatory role or be directly involved in electron transport. This Escherichia coli (strain K12) protein is 1,2-phenylacetyl-CoA epoxidase, subunit B (paaB).